Here is a 1719-residue protein sequence, read N- to C-terminus: Serine/threonine-protein kinase MRCK alpha (1719 aa).

Residues 77–343 enclose the Protein kinase domain; it reads FEILKVIGRG…IEDFKKHPFF (267 aa). ATP is bound by residues 83–91 and K106; that span reads IGRGAFGEV. The active-site Proton acceptor is D201. 2 positions are modified to phosphoserine; by autocatalysis: S222 and S234. T240 bears the Phosphothreonine; by autocatalysis mark. In terms of domain architecture, AGC-kinase C-terminal spans 344–414; it reads SGIDWDNIRN…TSSCVLSDRS (71 aa). 3 coiled-coil regions span residues 437–670, 713–820, and 880–943; these read NNLA…KQKQ, SEIK…WEAQ, and LELQ…SEKG. Residues 999–1049 form a Phorbol-ester/DAG-type zinc finger; it reads THQFFVKSFTAPTKCHQCTSLMVGLIRQGCSCEVCGFSCHITCVNKAPTVC. Residues 1069–1188 enclose the PH domain; that stretch reads GTAYEGHVRI…WVGVLSELHK (120 aa). In terms of domain architecture, CNH spans 1214-1486; sequence IKTTQAAAII…RPLNTEGSLN (273 aa). The residue at position 1532 (S1532) is a Phosphoserine. A CRIB domain is found at 1558 to 1571; sequence ISNPTNFNHIAHMG. The disordered stretch occupies residues 1579–1719; sequence LKDLPMNPRP…ESTDRGSWDP (141 aa). Positions 1591-1606 are enriched in polar residues; that stretch reads SRTVFSGSVSIPSITK. Phosphoserine is present on residues S1598, S1600, S1616, S1638, S1651, S1656, S1680, S1706, and S1708. The segment covering 1612 to 1627 has biased composition (low complexity); it reads GRSMSASSGLSARSSA. The span at 1652–1661 shows a compositional bias: low complexity; sequence PSEGSLSSGG.

Belongs to the protein kinase superfamily. AGC Ser/Thr protein kinase family. DMPK subfamily. As to quaternary structure, homodimer and homotetramer via the coiled coil regions. Interacts tightly with GTP-bound but not GDP-bound CDC42. Forms a tripartite complex with MYO18A and LRP35A with the latter acting as an adapter connecting CDC42BPA and MYO18A. LRP35A binding results in activation of CDC42BPA by abolition of its negative autoregulation. Interacts with LURAP1. Interacts (via AGC-kinase C-terminal domain) with FAM89B/LRAP25 (via LRR repeat). Forms a tripartite complex with FAM89B/LRAP25 and LIMK1. Requires Mg(2+) as cofactor. Post-translationally, proteolytically cleaved by caspases upon apoptosis induction. The cleavage at Asp-478 by CASP3 increases its kinase activity (in vitro).

It localises to the cytoplasm. It is found in the cell projection. The protein localises to the lamellipodium. The enzyme catalyses L-seryl-[protein] + ATP = O-phospho-L-seryl-[protein] + ADP + H(+). The catalysed reaction is L-threonyl-[protein] + ATP = O-phospho-L-threonyl-[protein] + ADP + H(+). Maintained in an inactive, closed conformation by an interaction between the kinase domain and the negative autoregulatory C-terminal coiled-coil region. Agonist binding to the phorbol ester binding site disrupts this, releasing the kinase domain to allow N-terminus-mediated dimerization and kinase activation by transautophosphorylation. Inhibited by chelerythrine chloride. Serine/threonine-protein kinase which is an important downstream effector of CDC42 and plays a role in the regulation of cytoskeleton reorganization and cell migration. Regulates actin cytoskeletal reorganization via phosphorylation of PPP1R12C and MYL9/MLC2. In concert with MYO18A and LRP35A, is involved in modulating lamellar actomyosin retrograde flow that is crucial to cell protrusion and migration. Phosphorylates: PPP1R12A and LIMK2. May play a role in TFRC-mediated iron uptake. In concert with FAM89B/LRAP25 mediates the targeting of LIMK1 to the lamellipodium resulting in its activation and subsequent phosphorylation of CFL1 which is important for lamellipodial F-actin regulation. Triggers the formation of an extrusion apical actin ring required for epithelial extrusion of apoptotic cells. The polypeptide is Serine/threonine-protein kinase MRCK alpha (Cdc42bpa) (Mus musculus (Mouse)).